The sequence spans 266 residues: Decarboxylase tropJ (266 aa).

The active-site Proton acceptor is the glutamate 80. The Zn(2+) site is built by glutamate 80, histidine 99, histidine 101, and histidine 180.

The protein belongs to the aldolase class II family. Zn(2+) serves as cofactor.

It functions in the pathway secondary metabolite biosynthesis. Decarboxylase; part of the gene cluster that mediates the biosynthesis of the tropolone class of fungal maleic anhydrides. The pathway begins with the synthesis of 3-methylorcinaldehyde by the non-reducing polyketide synthase (PKS) tropA. 3-methylorcinaldehyde is the substrate for the FAD-dependent monooxygenase tropB to yield a dearomatized hydroxycyclohexadione. The 2-oxoglutarate-dependent dioxygenase tropC then performs the oxidative ring expansion to provide the first tropolone metabolite stipitaldehyde. Trop D converts stipitaldehyde into stipitacetal which is in turn converted to stipitalide by the short-chain dehydrogenase/reductase tropE. The next steps involve tropF, tropG, tropH, tropI and tropJ to form successive tropolone maleic anhydrides including stipitaldehydic, stipitatonic and stipitatic acids. This Talaromyces stipitatus (strain ATCC 10500 / CBS 375.48 / QM 6759 / NRRL 1006) (Penicillium stipitatum) protein is Decarboxylase tropJ.